The sequence spans 211 residues: Small ribosomal subunit protein uS3 (211 aa).

One can recognise a KH type-2 domain in the interval 38–106; sequence LRKFIKKAFY…NIELNIIEVK (69 aa).

This sequence belongs to the universal ribosomal protein uS3 family. In terms of assembly, part of the 30S ribosomal subunit. Forms a tight complex with proteins S10 and S14.

In terms of biological role, binds the lower part of the 30S subunit head. Binds mRNA in the 70S ribosome, positioning it for translation. The polypeptide is Small ribosomal subunit protein uS3 (Ehrlichia ruminantium (strain Welgevonden)).